We begin with the raw amino-acid sequence, 435 residues long: 5-methylthioadenosine/S-adenosylhomocysteine deaminase (435 aa).

Residues His-65 and His-67 each contribute to the Zn(2+) site. 3 residues coordinate substrate: Glu-94, Arg-150, and His-189. His-216 contacts Zn(2+). The substrate site is built by Glu-219 and Asp-304. Zn(2+) is bound at residue Asp-304.

It belongs to the metallo-dependent hydrolases superfamily. MTA/SAH deaminase family. Zn(2+) serves as cofactor.

The enzyme catalyses S-adenosyl-L-homocysteine + H2O + H(+) = S-inosyl-L-homocysteine + NH4(+). It carries out the reaction S-methyl-5'-thioadenosine + H2O + H(+) = S-methyl-5'-thioinosine + NH4(+). In terms of biological role, catalyzes the deamination of 5-methylthioadenosine and S-adenosyl-L-homocysteine into 5-methylthioinosine and S-inosyl-L-homocysteine, respectively. Is also able to deaminate adenosine. The chain is 5-methylthioadenosine/S-adenosylhomocysteine deaminase from Bacillus cereus (strain ATCC 14579 / DSM 31 / CCUG 7414 / JCM 2152 / NBRC 15305 / NCIMB 9373 / NCTC 2599 / NRRL B-3711).